A 365-amino-acid polypeptide reads, in one-letter code: DNA replication and repair protein RecF (365 aa).

Glycine 30–threonine 37 contacts ATP.

This sequence belongs to the RecF family.

It localises to the cytoplasm. Functionally, the RecF protein is involved in DNA metabolism; it is required for DNA replication and normal SOS inducibility. RecF binds preferentially to single-stranded, linear DNA. It also seems to bind ATP. In Shewanella woodyi (strain ATCC 51908 / MS32), this protein is DNA replication and repair protein RecF.